Here is a 583-residue protein sequence, read N- to C-terminus: Leucine aminopeptidase 2, chloroplastic (583 aa).

The transit peptide at Met1–Gln70 directs the protein to the chloroplast. Mn(2+) contacts are provided by Lys351 and Asp356. Residue Lys363 is part of the active site. Residues Asp376, Asp436, and Glu438 each contribute to the Mn(2+) site. Arg440 is a catalytic residue.

This sequence belongs to the peptidase M17 family. Homohexamer (dimer of homotrimers). It depends on Mn(2+) as a cofactor.

The protein resides in the plastid. It is found in the chloroplast. The enzyme catalyses Release of an N-terminal amino acid, Xaa-|-Yaa-, in which Xaa is preferably Leu, but may be other amino acids including Pro although not Arg or Lys, and Yaa may be Pro. Amino acid amides and methyl esters are also readily hydrolyzed, but rates on arylamides are exceedingly low.. It catalyses the reaction Release of N-terminal proline from a peptide.. Functionally, presumably involved in the processing and regular turnover of intracellular proteins. Catalyzes the removal of unsubstituted N-terminal amino acids from various peptides. Possesses leucine aminopeptidase activity against the model substrate leucine-amido methyl coumarin. Does not seem to possess Cys-Gly dipeptidase activity. Its function is as follows. Functions as a molecular chaperone to protect proteins from heat-induced damage. In Arabidopsis thaliana (Mouse-ear cress), this protein is Leucine aminopeptidase 2, chloroplastic.